The following is a 519-amino-acid chain: Membrane-bound lytic murein transglycosylase F (519 aa).

The first 32 residues, 1–32 (MKKLKLNYLLIGVVTLLLAVALWPAIPWSGKA), serve as a signal peptide directing secretion. The interval 33 to 269 (DNRIAAIQAR…RLEEKYLGHG (237 aa)) is non-LT domain. Residues 270 to 519 (NDFDYVDTRS…PNTLSPVSPR (250 aa)) are LT domain. The active site involves glutamate 314. Residues 495–519 (PFSQAGAGGKTHSALPNTLSPVSPR) form a disordered region. Residues 508–519 (ALPNTLSPVSPR) show a composition bias toward polar residues.

The protein in the N-terminal section; belongs to the bacterial solute-binding protein 3 family. It in the C-terminal section; belongs to the transglycosylase Slt family.

It localises to the cell outer membrane. The catalysed reaction is Exolytic cleavage of the (1-&gt;4)-beta-glycosidic linkage between N-acetylmuramic acid (MurNAc) and N-acetylglucosamine (GlcNAc) residues in peptidoglycan, from either the reducing or the non-reducing ends of the peptidoglycan chains, with concomitant formation of a 1,6-anhydrobond in the MurNAc residue.. Its function is as follows. Murein-degrading enzyme that degrades murein glycan strands and insoluble, high-molecular weight murein sacculi, with the concomitant formation of a 1,6-anhydromuramoyl product. Lytic transglycosylases (LTs) play an integral role in the metabolism of the peptidoglycan (PG) sacculus. Their lytic action creates space within the PG sacculus to allow for its expansion as well as for the insertion of various structures such as secretion systems and flagella. The polypeptide is Membrane-bound lytic murein transglycosylase F (Cronobacter sakazakii (strain ATCC BAA-894) (Enterobacter sakazakii)).